Here is a 109-residue protein sequence, read N- to C-terminus: Ubiquitin-related modifier 1 homolog (109 aa).

Glycine 109 is modified (1-thioglycine). Glycine 109 participates in a covalent cross-link: Glycyl lysine isopeptide (Gly-Lys) (interchain with K-? in acceptor proteins).

The protein belongs to the URM1 family. C-terminal thiocarboxylation occurs in 2 steps, it is first acyl-adenylated (-COAMP) via the hesA/moeB/thiF part of the MOCS3 homolog, then thiocarboxylated (-COSH) via the rhodanese domain of the MOCS3 homolog.

Its subcellular location is the cytoplasm. It functions in the pathway tRNA modification; 5-methoxycarbonylmethyl-2-thiouridine-tRNA biosynthesis. In terms of biological role, acts as a sulfur carrier required for 2-thiolation of mcm(5)S(2)U at tRNA wobble positions of cytosolic tRNA(Lys), tRNA(Glu) and tRNA(Gln). Serves as sulfur donor in tRNA 2-thiolation reaction by being thiocarboxylated (-COSH) at its C-terminus by MOCS3. The sulfur is then transferred to tRNA to form 2-thiolation of mcm(5)S(2)U. Also acts as a ubiquitin-like protein (UBL) that is covalently conjugated via an isopeptide bond to lysine residues of target proteins. The thiocarboxylated form serves as substrate for conjugation and oxidative stress specifically induces the formation of UBL-protein conjugates. This chain is Ubiquitin-related modifier 1 homolog, found in Bombyx mori (Silk moth).